The primary structure comprises 194 residues: Probable GTP-binding protein EngB (194 aa).

Residues 22 to 194 (PLPEVALAGR…AWKAILHAIS (173 aa)) form the EngB-type G domain. GTP is bound by residues 30 to 37 (GRSNVGKS), 57 to 61 (GKTQT), 75 to 78 (DVPG), 142 to 145 (TKCD), and 174 to 176 (FSS). Mg(2+) contacts are provided by serine 37 and threonine 59.

It belongs to the TRAFAC class TrmE-Era-EngA-EngB-Septin-like GTPase superfamily. EngB GTPase family. The cofactor is Mg(2+).

Necessary for normal cell division and for the maintenance of normal septation. The protein is Probable GTP-binding protein EngB of Halalkalibacterium halodurans (strain ATCC BAA-125 / DSM 18197 / FERM 7344 / JCM 9153 / C-125) (Bacillus halodurans).